Reading from the N-terminus, the 127-residue chain is Fluoride-specific ion channel FluC 1 (127 aa).

Helical transmembrane passes span 3–23, 35–55, 74–94, and 102–122; these read LLIV…VGQW, IAML…FGLY, IGFF…VLLI, and LFSY…LGFY. Na(+)-binding residues include Gly78 and Thr81.

This sequence belongs to the fluoride channel Fluc/FEX (TC 1.A.43) family.

The protein resides in the cell membrane. It carries out the reaction fluoride(in) = fluoride(out). Na(+) is not transported, but it plays an essential structural role and its presence is essential for fluoride channel function. Fluoride-specific ion channel. Important for reducing fluoride concentration in the cell, thus reducing its toxicity. The protein is Fluoride-specific ion channel FluC 1 of Halalkalibacterium halodurans (strain ATCC BAA-125 / DSM 18197 / FERM 7344 / JCM 9153 / C-125) (Bacillus halodurans).